The following is a 99-amino-acid chain: Aspartyl/glutamyl-tRNA(Asn/Gln) amidotransferase subunit C (99 aa).

The protein belongs to the GatC family. In terms of assembly, heterotrimer of A, B and C subunits.

The catalysed reaction is L-glutamyl-tRNA(Gln) + L-glutamine + ATP + H2O = L-glutaminyl-tRNA(Gln) + L-glutamate + ADP + phosphate + H(+). The enzyme catalyses L-aspartyl-tRNA(Asn) + L-glutamine + ATP + H2O = L-asparaginyl-tRNA(Asn) + L-glutamate + ADP + phosphate + 2 H(+). Its function is as follows. Allows the formation of correctly charged Asn-tRNA(Asn) or Gln-tRNA(Gln) through the transamidation of misacylated Asp-tRNA(Asn) or Glu-tRNA(Gln) in organisms which lack either or both of asparaginyl-tRNA or glutaminyl-tRNA synthetases. The reaction takes place in the presence of glutamine and ATP through an activated phospho-Asp-tRNA(Asn) or phospho-Glu-tRNA(Gln). The sequence is that of Aspartyl/glutamyl-tRNA(Asn/Gln) amidotransferase subunit C from Cupriavidus metallidurans (strain ATCC 43123 / DSM 2839 / NBRC 102507 / CH34) (Ralstonia metallidurans).